Reading from the N-terminus, the 115-residue chain is Large ribosomal subunit protein bL19 (115 aa).

Belongs to the bacterial ribosomal protein bL19 family.

In terms of biological role, this protein is located at the 30S-50S ribosomal subunit interface and may play a role in the structure and function of the aminoacyl-tRNA binding site. The polypeptide is Large ribosomal subunit protein bL19 (Oleidesulfovibrio alaskensis (strain ATCC BAA-1058 / DSM 17464 / G20) (Desulfovibrio alaskensis)).